Reading from the N-terminus, the 109-residue chain is Cell division protein ZapA (109 aa).

Residues 22–99 (EQQDALNLAA…IEQALLEQGR (78 aa)) are a coiled coil.

This sequence belongs to the ZapA family. Type 1 subfamily. Homodimer. Interacts with FtsZ.

It is found in the cytoplasm. Functionally, activator of cell division through the inhibition of FtsZ GTPase activity, therefore promoting FtsZ assembly into bundles of protofilaments necessary for the formation of the division Z ring. It is recruited early at mid-cell but it is not essential for cell division. The sequence is that of Cell division protein ZapA from Erwinia tasmaniensis (strain DSM 17950 / CFBP 7177 / CIP 109463 / NCPPB 4357 / Et1/99).